The chain runs to 169 residues: Der GTPase-activating protein YihI (169 aa).

Disordered regions lie at residues 1–99 and 146–169; these read MKPS…QAEL and SYDD…LRGN. The span at 10–19 shows a compositional bias: basic residues; sequence SKGHAKARRK. Positions 20 to 30 are enriched in basic and acidic residues; it reads TREELDQEARD. The span at 31-40 shows a compositional bias: basic residues; that stretch reads RKRQKKRRGH. Over residues 49 to 58 the composition is skewed to polar residues; sequence GNTTSGSKGQ. A compositionally biased stretch (acidic residues) spans 147–159; that stretch reads YDDDEEEEEDEKQ. Residues 160–169 show a composition bias toward basic and acidic residues; the sequence is EDMMRLLRGN.

Belongs to the YihI family. Interacts with Der.

Its function is as follows. A GTPase-activating protein (GAP) that modifies Der/EngA GTPase function. May play a role in ribosome biogenesis. The sequence is that of Der GTPase-activating protein YihI from Escherichia coli O45:K1 (strain S88 / ExPEC).